The primary structure comprises 576 residues: Rop guanine nucleotide exchange factor 13 (576 aa).

In terms of domain architecture, PRONE spans 119 to 485 (KSCYFAYVTE…QLTQNPELAM (367 aa)). Positions 557 to 570 (KTTYLESLGTTRSP) are enriched in polar residues. The segment at 557-576 (KTTYLESLGTTRSPTAGRYS) is disordered.

Interacts with PRK6. In terms of tissue distribution, specifically expressed in mature flowers.

Its function is as follows. Guanine-nucleotide exchange factor (GEF) that acts as an activator of Rop (Rho of plants) GTPases by promoting the exchange of GDP for GTP. This chain is Rop guanine nucleotide exchange factor 13, found in Arabidopsis thaliana (Mouse-ear cress).